Consider the following 99-residue polypeptide: Keratinocyte differentiation-associated protein (99 aa).

Positions 1–22 (MKIPVLPAVVLLSLLVLHSAQG) are cleaved as a signal peptide.

As to expression, highly expressed in skin and detected at lower levels in thymus. In skin, found exclusively in lamellar granules of granular keratinocytes and in the intracellular space of the stratum corneum. Also highly expressed in oral mucosa, tongue, esophagus, and stomach, and at much lower levels in bladder and uterus. Not detected in gastrointestinal mucosa.

The protein resides in the secreted. Functionally, may act as a soluble regulator of keratinocyte differentiation. May play an important role in embryonic skin morphogenesis. The sequence is that of Keratinocyte differentiation-associated protein (KRTDAP) from Homo sapiens (Human).